Consider the following 178-residue polypeptide: Translation initiation factor IF-3 (178 aa).

This sequence belongs to the IF-3 family. Monomer.

It is found in the cytoplasm. IF-3 binds to the 30S ribosomal subunit and shifts the equilibrium between 70S ribosomes and their 50S and 30S subunits in favor of the free subunits, thus enhancing the availability of 30S subunits on which protein synthesis initiation begins. In Ralstonia nicotianae (strain ATCC BAA-1114 / GMI1000) (Ralstonia solanacearum), this protein is Translation initiation factor IF-3.